The following is a 196-amino-acid chain: Early light-induced protein, chloroplastic (196 aa).

The transit peptide at 1 to 48 directs the protein to the chloroplast; the sequence is MAVSSCQSIMSNSMTNISSRSRVNQFTNIPSVYIPTLRRNVSLKVRSM. Over residues 47 to 57 the composition is skewed to basic and acidic residues; that stretch reads SMAEGEPKEQS. A disordered region spans residues 47–81; it reads SMAEGEPKEQSKVAVDPTTPTASTPTPQPAYTRPP. 3 helical membrane-spanning segments follow: residues 105–125, 132–152, and 176–196; these read LAMI…QGLS, GVAW…IPFF, and IAML…TSLV.

It belongs to the ELIP/psbS family.

It localises to the plastid. Its subcellular location is the chloroplast membrane. Probably involved in the integration of pigments into the mature pigment-protein complexes. This chain is Early light-induced protein, chloroplastic, found in Pisum sativum (Garden pea).